We begin with the raw amino-acid sequence, 219 residues long: Thiamine-phosphate synthase (219 aa).

Residues 45-49 (QYREK) and N77 contribute to the 4-amino-2-methyl-5-(diphosphooxymethyl)pyrimidine site. 2 residues coordinate Mg(2+): D78 and D97. A 4-amino-2-methyl-5-(diphosphooxymethyl)pyrimidine-binding site is contributed by T116. Residue 142-144 (SFT) coordinates 2-[(2R,5Z)-2-carboxy-4-methylthiazol-5(2H)-ylidene]ethyl phosphate. K145 is a binding site for 4-amino-2-methyl-5-(diphosphooxymethyl)pyrimidine. Residues G173 and 193–194 (VT) contribute to the 2-[(2R,5Z)-2-carboxy-4-methylthiazol-5(2H)-ylidene]ethyl phosphate site.

Belongs to the thiamine-phosphate synthase family. It depends on Mg(2+) as a cofactor.

It catalyses the reaction 2-[(2R,5Z)-2-carboxy-4-methylthiazol-5(2H)-ylidene]ethyl phosphate + 4-amino-2-methyl-5-(diphosphooxymethyl)pyrimidine + 2 H(+) = thiamine phosphate + CO2 + diphosphate. The enzyme catalyses 2-(2-carboxy-4-methylthiazol-5-yl)ethyl phosphate + 4-amino-2-methyl-5-(diphosphooxymethyl)pyrimidine + 2 H(+) = thiamine phosphate + CO2 + diphosphate. It carries out the reaction 4-methyl-5-(2-phosphooxyethyl)-thiazole + 4-amino-2-methyl-5-(diphosphooxymethyl)pyrimidine + H(+) = thiamine phosphate + diphosphate. The protein operates within cofactor biosynthesis; thiamine diphosphate biosynthesis; thiamine phosphate from 4-amino-2-methyl-5-diphosphomethylpyrimidine and 4-methyl-5-(2-phosphoethyl)-thiazole: step 1/1. Its function is as follows. Condenses 4-methyl-5-(beta-hydroxyethyl)thiazole monophosphate (THZ-P) and 2-methyl-4-amino-5-hydroxymethyl pyrimidine pyrophosphate (HMP-PP) to form thiamine monophosphate (TMP). The sequence is that of Thiamine-phosphate synthase from Caldicellulosiruptor bescii (strain ATCC BAA-1888 / DSM 6725 / KCTC 15123 / Z-1320) (Anaerocellum thermophilum).